We begin with the raw amino-acid sequence, 311 residues long: HPr kinase/phosphorylase (311 aa).

Residues histidine 138 and lysine 159 contribute to the active site. 153–160 (GDSGIGKS) serves as a coordination point for ATP. Position 160 (serine 160) interacts with Mg(2+). Aspartate 177 serves as the catalytic Proton acceptor; for phosphorylation activity. Proton donor; for dephosphorylation activity. Residues 201–210 (LEIRGVGIID) are important for the catalytic mechanism of both phosphorylation and dephosphorylation. Glutamate 202 is a Mg(2+) binding site. Arginine 243 is an active-site residue. The important for the catalytic mechanism of dephosphorylation stretch occupies residues 264 to 269 (PVKTGR).

The protein belongs to the HPrK/P family. Homohexamer. The cofactor is Mg(2+).

It carries out the reaction [HPr protein]-L-serine + ATP = [HPr protein]-O-phospho-L-serine + ADP + H(+). It catalyses the reaction [HPr protein]-O-phospho-L-serine + phosphate + H(+) = [HPr protein]-L-serine + diphosphate. Its function is as follows. Catalyzes the ATP- as well as the pyrophosphate-dependent phosphorylation of a specific serine residue in HPr, a phosphocarrier protein of the phosphoenolpyruvate-dependent sugar phosphotransferase system (PTS). HprK/P also catalyzes the pyrophosphate-producing, inorganic phosphate-dependent dephosphorylation (phosphorolysis) of seryl-phosphorylated HPr (P-Ser-HPr). The two antagonistic activities of HprK/P are regulated by several intracellular metabolites, which change their concentration in response to the absence or presence of rapidly metabolisable carbon sources (glucose, fructose, etc.) in the growth medium. Therefore, by controlling the phosphorylation state of HPr, HPrK/P is a sensor enzyme that plays a major role in the regulation of carbon metabolism and sugar transport: it mediates carbon catabolite repression (CCR), and regulates PTS-catalyzed carbohydrate uptake and inducer exclusion. In Streptococcus agalactiae serotype Ia (strain ATCC 27591 / A909 / CDC SS700), this protein is HPr kinase/phosphorylase.